The following is a 440-amino-acid chain: Protein dumpy-20 (440 aa).

The segment at 96–119 (ILSDPSLHGSNSSSSTSDVGSSVD) is disordered. Residues 98–119 (SDPSLHGSNSSSSTSDVGSSVD) show a composition bias toward low complexity. 2 consecutive BED-type zinc fingers follow at residues 137–186 (PTEN…YQKV) and 350–399 (KTEH…YNDV). Positions 156, 159, 174, 179, 369, 372, 387, and 392 each coordinate Zn(2+).

Its function is as follows. May be directly or indirectly involved in cuticle function. The polypeptide is Protein dumpy-20 (dpy-20) (Caenorhabditis elegans).